Reading from the N-terminus, the 497-residue chain is Cobyric acid synthase (497 aa).

Residues 257-431 (WLRVAAVRLP…WHGLLDNDDF (175 aa)) enclose the GATase cobBQ-type domain. Cys-338 serves as the catalytic Nucleophile. His-423 is an active-site residue.

The protein belongs to the CobB/CobQ family. CobQ subfamily.

Its pathway is cofactor biosynthesis; adenosylcobalamin biosynthesis. Functionally, catalyzes amidations at positions B, D, E, and G on adenosylcobyrinic A,C-diamide. NH(2) groups are provided by glutamine, and one molecule of ATP is hydrogenolyzed for each amidation. The protein is Cobyric acid synthase of Mycolicibacterium paratuberculosis (strain ATCC BAA-968 / K-10) (Mycobacterium paratuberculosis).